Reading from the N-terminus, the 406-residue chain is Phosphopentomutase (406 aa).

Mn(2+)-binding residues include Asp-10, Asp-305, His-310, Asp-346, His-347, and His-358.

The protein belongs to the phosphopentomutase family. Mn(2+) is required as a cofactor.

It localises to the cytoplasm. It catalyses the reaction 2-deoxy-alpha-D-ribose 1-phosphate = 2-deoxy-D-ribose 5-phosphate. It carries out the reaction alpha-D-ribose 1-phosphate = D-ribose 5-phosphate. It participates in carbohydrate degradation; 2-deoxy-D-ribose 1-phosphate degradation; D-glyceraldehyde 3-phosphate and acetaldehyde from 2-deoxy-alpha-D-ribose 1-phosphate: step 1/2. Functionally, isomerase that catalyzes the conversion of deoxy-ribose 1-phosphate (dRib-1-P) and ribose 1-phosphate (Rib-1-P) to deoxy-ribose 5-phosphate (dRib-5-P) and ribose 5-phosphate (Rib-5-P), respectively. In Photobacterium profundum (strain SS9), this protein is Phosphopentomutase.